The primary structure comprises 198 residues: Holliday junction branch migration complex subunit RuvA (198 aa).

The tract at residues 1-63 is domain I; it reads MIALLTGQIA…EDAIQLYGFR (63 aa). Residues 64–142 form a domain II region; it reads TSLEKSFFQL…KLDLSSVVVP (79 aa). The segment at 143 to 153 is flexible linker; sequence EPRQMPEDDLL. A domain III region spans residues 153-198; that stretch reads LEDVVSALLNLGYKEPQVRKVLAGLNPGSDASLEGVLKQALKSLMR.

Belongs to the RuvA family. Homotetramer. Forms an RuvA(8)-RuvB(12)-Holliday junction (HJ) complex. HJ DNA is sandwiched between 2 RuvA tetramers; dsDNA enters through RuvA and exits via RuvB. An RuvB hexamer assembles on each DNA strand where it exits the tetramer. Each RuvB hexamer is contacted by two RuvA subunits (via domain III) on 2 adjacent RuvB subunits; this complex drives branch migration. In the full resolvosome a probable DNA-RuvA(4)-RuvB(12)-RuvC(2) complex forms which resolves the HJ.

The protein resides in the cytoplasm. Functionally, the RuvA-RuvB-RuvC complex processes Holliday junction (HJ) DNA during genetic recombination and DNA repair, while the RuvA-RuvB complex plays an important role in the rescue of blocked DNA replication forks via replication fork reversal (RFR). RuvA specifically binds to HJ cruciform DNA, conferring on it an open structure. The RuvB hexamer acts as an ATP-dependent pump, pulling dsDNA into and through the RuvAB complex. HJ branch migration allows RuvC to scan DNA until it finds its consensus sequence, where it cleaves and resolves the cruciform DNA. The chain is Holliday junction branch migration complex subunit RuvA from Pelobacter propionicus (strain DSM 2379 / NBRC 103807 / OttBd1).